Reading from the N-terminus, the 122-residue chain is Large ribosomal subunit protein uL14c (122 aa).

It belongs to the universal ribosomal protein uL14 family. In terms of assembly, part of the 50S ribosomal subunit.

It is found in the plastid. Its subcellular location is the chloroplast. In terms of biological role, binds to 23S rRNA. This is Large ribosomal subunit protein uL14c from Chlorokybus atmophyticus (Soil alga).